The primary structure comprises 96 residues: Integration host factor subunit beta (96 aa).

It belongs to the bacterial histone-like protein family. As to quaternary structure, heterodimer of an alpha and a beta chain.

Functionally, this protein is one of the two subunits of integration host factor, a specific DNA-binding protein that functions in genetic recombination as well as in transcriptional and translational control. The polypeptide is Integration host factor subunit beta (Methylocella silvestris (strain DSM 15510 / CIP 108128 / LMG 27833 / NCIMB 13906 / BL2)).